We begin with the raw amino-acid sequence, 349 residues long: Hepatic sodium/bile acid cotransporter (349 aa).

At 1–22 (MEAHNASAPFNFTLPPNFGKRP) the chain is on the extracellular side. N-linked (GlcNAc...) asparagine glycans are attached at residues N5 and N11. A helical membrane pass occupies residues 23–44 (TDLALSVILVFMLFFIMLSLGC). Over 45–47 (TME) the chain is Cytoplasmic. The chain crosses the membrane as a helical span at residues 48–83 (FSKIKAHLWKPKGLAIALVAQYGIMPLTAFVLGKVF). Over 84–86 (RLK) the chain is Extracellular. A discontinuously helical transmembrane segment spans residues 87–112 (NIEALAILVCGCSPGGNLSNVFSLAM). The Cytoplasmic segment spans residues 113-115 (KGD). Residues 116–142 (MNLSIVMTTCSTFCALGMMPLLLYIYS) traverse the membrane as a helical segment. The Extracellular portion of the chain corresponds to 143–156 (RGIYDGDLKDKVPY). The chain crosses the membrane as a helical span at residues 157 to 179 (KGIVISLVLVLIPCTIGIVLKSK). The Cytoplasmic portion of the chain corresponds to 180–183 (RPQY). Residues 184-217 (MRYVIKGGMIIILLCSVAVTVLSAINVGKSIMFA) traverse the membrane as a helical segment. Residues 218 to 219 (MT) lie on the Extracellular side of the membrane. The chain crosses the membrane as a helical span at residues 220-243 (PLLIATSSLMPFIGFLLGYVLSAL). Residues 244–247 (FCLN) are Cytoplasmic-facing. The chain crosses the membrane as a discontinuously helical span at residues 248–273 (GRCRRTVSMETGCQNVQLCSTILNVA). At 274–280 (FPPEVIG) the chain is on the extracellular side. Residues 281 to 311 (PLFFFPLLYMIFQLGEGLLLIAIFWCYEKFK) form a helical membrane-spanning segment. Residues 312–349 (TPKDKTKMIYTAATTEETIPGALGNGTYKGEDCSPCTA) lie on the Cytoplasmic side of the membrane.

Belongs to the bile acid:sodium symporter (BASS) (TC 2.A.28) family. (Microbial infection) Interacts with the myristoylated pre-S1 domain of hepatitis B virus large envelope protein; myristoylation is essential for this interaction. As to expression, expressed in liver. Expressed in placental trophoblasts.

The protein resides in the cell membrane. The enzyme catalyses taurocholate(out) + 2 Na(+)(out) = taurocholate(in) + 2 Na(+)(in). It carries out the reaction cholate(out) + 2 Na(+)(out) = cholate(in) + 2 Na(+)(in). The catalysed reaction is estrone 3-sulfate(out) + 2 Na(+)(out) = estrone 3-sulfate(in) + 2 Na(+)(in). It catalyses the reaction taurochenodeoxycholate(out) + 2 Na(+)(out) = taurochenodeoxycholate(in) + 2 Na(+)(in). The enzyme catalyses tauroursodeoxycholate(out) + 2 Na(+)(out) = tauroursodeoxycholate(in) + 2 Na(+)(in). It carries out the reaction glycocholate(out) + 2 Na(+)(out) = glycocholate(in) + 2 Na(+)(in). The catalysed reaction is tauronorcholate(out) + 2 Na(+)(out) = tauronorcholate(in) + 2 Na(+)(in). It catalyses the reaction taurodeoxycholate(out) + 2 Na(+)(out) = taurodeoxycholate(in) + 2 Na(+)(in). The enzyme catalyses tauroallocholate(out) + 2 Na(+)(out) = tauroallocholate(in) + 2 Na(+)(in). It carries out the reaction taurohyodeoxycholate(out) + 2 Na(+)(out) = taurohyodeoxycholate(in) + 2 Na(+)(in). The catalysed reaction is taurohyocholate(out) + 2 Na(+)(out) = taurohyocholate(in) + 2 Na(+)(in). It catalyses the reaction tauro-beta-muricholate(out) + 2 Na(+)(out) = tauro-beta-muricholate(in) + 2 Na(+)(in). Its activity is regulated as follows. The transport of bile acids is sodium-dependent. Functionally, as a major transporter of conjugated bile salts from plasma into the hepatocyte, it plays a key role in the enterohepatic circulation of bile salts necessary for the solubilization and absorption of dietary fat and fat-soluble vitamins. It is strictly dependent on the extracellular presence of sodium. It exhibits broad substrate specificity and transports various bile acids, such as taurocholate, cholate, as well as non-bile acid organic compounds, such as estrone sulfate. Works collaboratively with the ileal transporter (NTCP2), the organic solute transporter (OST), and the bile salt export pump (BSEP), to ensure efficacious biological recycling of bile acids during enterohepatic circulation. In terms of biological role, (Microbial infection) Acts as an entry receptor for hepatitis B virus (HBV). The recognition for human SLC10A1/NTCP is highly specific. This Homo sapiens (Human) protein is Hepatic sodium/bile acid cotransporter (SLC10A1).